The sequence spans 427 residues: NADH-quinone oxidoreductase subunit 14 (427 aa).

14 helical membrane-spanning segments follow: residues 1–21 (MTLA…FVLP), 30–50 (LLGL…PFAF), 57–77 (GVSQ…VGLV), 79–99 (SGRF…HLLA), 104–124 (LLLM…LATW), 137–157 (FLLG…FYGA), 172–192 (YALA…LAPF), 204–224 (PTPV…AALL), 230–250 (PEAL…AALA), 257–277 (LLAY…YTGN), 280–300 (ALGF…AVLS), 322–342 (LGLA…LAGF), 360–380 (VLVL…GLGL), and 400–420 (AAVV…GLVL).

The protein belongs to the complex I subunit 2 family. In terms of assembly, NDH-1 is composed of 15 different subunits, Nqo1 to Nqo15. The complex has a L-shaped structure, with the hydrophobic arm (subunits Nqo7, Nqo8 and Nqo10 to Nqo14) embedded in the membrane and the hydrophilic peripheral arm (subunits Nqo1 to Nqo6, Nqo9 and Nqo15) protruding into the bacterial cytoplasm. The hydrophilic domain contains all the redox centers.

The protein resides in the cell inner membrane. The enzyme catalyses a quinone + NADH + 5 H(+)(in) = a quinol + NAD(+) + 4 H(+)(out). NDH-1 shuttles electrons from NADH, via FMN and iron-sulfur (Fe-S) centers, to quinones in the respiratory chain. The immediate electron acceptor for the enzyme in this species is menaquinone. Couples the redox reaction to proton translocation (for every two electrons transferred, four hydrogen ions are translocated across the cytoplasmic membrane), and thus conserves the redox energy in a proton gradient required for the synthesis of ATP. The sequence is that of NADH-quinone oxidoreductase subunit 14 (nqo14) from Thermus thermophilus (strain ATCC 27634 / DSM 579 / HB8).